A 505-amino-acid polypeptide reads, in one-letter code: Lysine--tRNA ligase (505 aa).

Mg(2+) is bound by residues glutamate 415 and glutamate 422.

This sequence belongs to the class-II aminoacyl-tRNA synthetase family. In terms of assembly, homodimer. Requires Mg(2+) as cofactor.

The protein localises to the cytoplasm. It carries out the reaction tRNA(Lys) + L-lysine + ATP = L-lysyl-tRNA(Lys) + AMP + diphosphate. The sequence is that of Lysine--tRNA ligase from Shigella boydii serotype 4 (strain Sb227).